The following is a 397-amino-acid chain: Tyrosine--tRNA ligase (397 aa).

The 'HIGH' region motif lies at 39-48; it reads PTAPDLHLGH. A 'KMSKS' region motif is present at residues 223–227; sequence KMSKS. K226 contacts ATP. The 62-residue stretch at 334–395 folds into the S4 RNA-binding domain; the sequence is YPIANLVHDL…GKRKFAKIRL (62 aa).

The protein belongs to the class-I aminoacyl-tRNA synthetase family. TyrS type 2 subfamily. Homodimer.

The protein resides in the cytoplasm. It carries out the reaction tRNA(Tyr) + L-tyrosine + ATP = L-tyrosyl-tRNA(Tyr) + AMP + diphosphate + H(+). Its function is as follows. Catalyzes the attachment of tyrosine to tRNA(Tyr) in a two-step reaction: tyrosine is first activated by ATP to form Tyr-AMP and then transferred to the acceptor end of tRNA(Tyr). This is Tyrosine--tRNA ligase from Methylococcus capsulatus (strain ATCC 33009 / NCIMB 11132 / Bath).